The primary structure comprises 88 residues: Co-chaperonin GroES (88 aa).

It belongs to the GroES chaperonin family. As to quaternary structure, heptamer of 7 subunits arranged in a ring. Interacts with the chaperonin GroEL.

It localises to the cytoplasm. Its function is as follows. Together with the chaperonin GroEL, plays an essential role in assisting protein folding. The GroEL-GroES system forms a nano-cage that allows encapsulation of the non-native substrate proteins and provides a physical environment optimized to promote and accelerate protein folding. GroES binds to the apical surface of the GroEL ring, thereby capping the opening of the GroEL channel. The protein is Co-chaperonin GroES of Rubrobacter xylanophilus (strain DSM 9941 / JCM 11954 / NBRC 16129 / PRD-1).